A 207-amino-acid polypeptide reads, in one-letter code: Large ribosomal subunit protein uL4 (207 aa).

Residues 44–85 are disordered; sequence MRQGTHKTKNRAEVSGGGRKPWRQKGTGRARQGSIRSPQWRG.

This sequence belongs to the universal ribosomal protein uL4 family. In terms of assembly, part of the 50S ribosomal subunit.

Functionally, one of the primary rRNA binding proteins, this protein initially binds near the 5'-end of the 23S rRNA. It is important during the early stages of 50S assembly. It makes multiple contacts with different domains of the 23S rRNA in the assembled 50S subunit and ribosome. Forms part of the polypeptide exit tunnel. The sequence is that of Large ribosomal subunit protein uL4 from Geobacillus thermodenitrificans (strain NG80-2).